We begin with the raw amino-acid sequence, 872 residues long: G-type lectin S-receptor-like serine/threonine-protein kinase At5g24080 (872 aa).

The N-terminal stretch at 1–25 is a signal peptide; sequence MSSFHFYFPSVGLFSFFCFFLVSLA. Residues 26–472 lie on the Extracellular side of the membrane; it reads TEPHIGLGSK…SRKSHGLRQK (447 aa). The 120-residue stretch at 30–149 folds into the Bulb-type lectin domain; it reads IGLGSKLKAS…EVTAGPTIWQ (120 aa). N-linked (GlcNAc...) asparagine glycans are attached at residues N49, N117, N208, N219, N261, and N294. Positions 306–344 constitute an EGF-like; atypical domain; the sequence is VSNPCDIAGICGNGVCNLDRTKKNADCLCLPGSVKLPDQ. 2 disulfides stabilise this stretch: C310-C321 and C316-C332. N-linked (GlcNAc...) asparagine glycosylation is found at N353, N367, and N390. A PAN domain is found at 360–447; sequence CESNINRNGS…PGSTLFVKTR (88 aa). 2 disulfides stabilise this stretch: C400–C424 and C404–C410. N449 and N459 each carry an N-linked (GlcNAc...) asparagine glycan. A helical transmembrane segment spans residues 473-493; sequence VLVIPIVVGMLVLVALLGMLL. Residues 494–872 lie on the Cytoplasmic side of the membrane; sequence YYNLDRKRTL…TCSYSSMSPR (379 aa). T521 is modified (phosphothreonine). The Protein kinase domain occupies 530 to 810; the sequence is NNFSQLLGSG…LEGTSDEINL (281 aa). ATP is bound by residues 536–544 and K558; that span reads LGSGGFGTV. At Y603 the chain carries Phosphotyrosine. Positions 619 to 637 are caM-binding; that stretch reads EQTANLLDWRTRFEIAVAT. The active-site Proton acceptor is the D656. A phosphothreonine mark is found at T690 and T695.

Belongs to the protein kinase superfamily. Ser/Thr protein kinase family.

The protein resides in the cell membrane. It carries out the reaction L-seryl-[protein] + ATP = O-phospho-L-seryl-[protein] + ADP + H(+). The enzyme catalyses L-threonyl-[protein] + ATP = O-phospho-L-threonyl-[protein] + ADP + H(+). In Arabidopsis thaliana (Mouse-ear cress), this protein is G-type lectin S-receptor-like serine/threonine-protein kinase At5g24080.